A 256-amino-acid chain; its full sequence is Hydroxyacylglutathione hydrolase (256 aa).

Zn(2+) is bound by residues His53, His55, Asp57, His58, His113, Asp130, and His168.

It belongs to the metallo-beta-lactamase superfamily. Glyoxalase II family. In terms of assembly, monomer. Zn(2+) serves as cofactor.

It carries out the reaction an S-(2-hydroxyacyl)glutathione + H2O = a 2-hydroxy carboxylate + glutathione + H(+). It participates in secondary metabolite metabolism; methylglyoxal degradation; (R)-lactate from methylglyoxal: step 2/2. Thiolesterase that catalyzes the hydrolysis of S-D-lactoyl-glutathione to form glutathione and D-lactic acid. This is Hydroxyacylglutathione hydrolase from Tolumonas auensis (strain DSM 9187 / NBRC 110442 / TA 4).